Consider the following 459-residue polypeptide: ATP-dependent protease ATPase subunit HslU (459 aa).

ATP contacts are provided by residues Val26, 68–73 (GVGKTE), Asp271, Glu337, and Arg409.

This sequence belongs to the ClpX chaperone family. HslU subfamily. As to quaternary structure, a double ring-shaped homohexamer of HslV is capped on each side by a ring-shaped HslU homohexamer. The assembly of the HslU/HslV complex is dependent on binding of ATP.

It is found in the cytoplasm. In terms of biological role, ATPase subunit of a proteasome-like degradation complex; this subunit has chaperone activity. The binding of ATP and its subsequent hydrolysis by HslU are essential for unfolding of protein substrates subsequently hydrolyzed by HslV. HslU recognizes the N-terminal part of its protein substrates and unfolds these before they are guided to HslV for hydrolysis. The polypeptide is ATP-dependent protease ATPase subunit HslU (Xylella fastidiosa (strain M23)).